The following is an 814-amino-acid chain: ATP-dependent 6-phosphofructokinase 1 (814 aa).

The tract at residues 1-420 (MDADASTITP…NLETYKLLTK (420 aa)) is N-terminal catalytic PFK domain 1. Residues Gly-55, 118–119 (RS), and 148–151 (GDGS) each bind ATP. Asp-149 contributes to the Mg(2+) binding site. Residues 194–196 (SID), Arg-231, 238–240 (MGR), Glu-294, Arg-322, and 328–331 (HVQR) contribute to the substrate site. The active-site Proton acceptor is the Asp-196. The tract at residues 421–435 (MRTVEKDNLSEGHKF) is interdomain linker. A C-terminal regulatory PFK domain 2 region spans residues 436-814 (NVAVINVGAP…EEESADSHMF (379 aa)). Beta-D-fructose 2,6-bisphosphate-binding positions include Lys-505, 563–567 (TISNN), Arg-601, 608–610 (MGG), Glu-664, Arg-690, 696–699 (HVQQ), and Arg-771.

This sequence belongs to the phosphofructokinase type A (PFKA) family. ATP-dependent PFK group I subfamily. Eukaryotic two domain clade 'E' sub-subfamily. Homotetramer. Mg(2+) serves as cofactor.

The protein localises to the cytoplasm. The catalysed reaction is beta-D-fructose 6-phosphate + ATP = beta-D-fructose 1,6-bisphosphate + ADP + H(+). It participates in carbohydrate degradation; glycolysis; D-glyceraldehyde 3-phosphate and glycerone phosphate from D-glucose: step 3/4. Allosterically activated by ADP, AMP, or fructose 2,6-bisphosphate, and allosterically inhibited by ATP or citrate. In terms of biological role, catalyzes the phosphorylation of D-fructose 6-phosphate to fructose 1,6-bisphosphate by ATP, the first committing step of glycolysis. This is ATP-dependent 6-phosphofructokinase 1 from Caenorhabditis elegans.